Here is a 501-residue protein sequence, read N- to C-terminus: UPF0616 protein C1687.04 (501 aa).

It belongs to the UPF0616 family.

The protein resides in the cytoplasm. Its subcellular location is the nucleus. This chain is UPF0616 protein C1687.04, found in Schizosaccharomyces pombe (strain 972 / ATCC 24843) (Fission yeast).